Here is a 1286-residue protein sequence, read N- to C-terminus: CLIP-associating protein 2 (1286 aa).

Residues 1-40 are golgi localization; that stretch reads MRRLICKRICDYKSFDDEESVDGNRPSSAASAFKVPAPKT. A phosphoserine mark is found at Ser-14 and Ser-20. Residues 17 to 70 form a disordered region; that stretch reads DEESVDGNRPSSAASAFKVPAPKTPGNPVNSARKPGSAGGPKAGGTSKEGGAGA. The span at 53-69 shows a compositional bias: gly residues; that stretch reads SAGGPKAGGTSKEGGAG. The segment at 66 to 317 is TOG 1; sequence GGAGAVDEDD…KSLQTYLKSS (252 aa). HEAT repeat units follow at residues 179 to 214, 215 to 251, and 256 to 293; these read HGAE…IRHT, HVPR…EWQT, and RHAA…HFPG. Disordered regions lie at residues 320-350 and 355-374; these read VASL…TANP and GRVS…LQRS. Phosphoserine is present on residues Ser-322, Ser-333, and Ser-336. Positions 322 to 340 are enriched in low complexity; it reads SLPQSDRSSSSSQESLNRP. Over residues 341–350 the composition is skewed to polar residues; that stretch reads FSSKWSTANP. Residues Ser-374, Ser-376, and Ser-413 each carry the phosphoserine modification. Residues 410 to 473 are disordered; sequence SYASLEDTSD…GSRSGSPGRV (64 aa). Positions 417–431 are enriched in basic and acidic residues; that stretch reads TSDKMDGTASEDGRV. Residues 450 to 565 form an interaction with microtubules, MAPRE1 and MAPRE3 region; sequence RGRSRTKMVS…GPGYGMSQSS (116 aa). Over residues 459–473 the composition is skewed to low complexity; the sequence is SQSQPGSRSGSPGRV. Ser-461, Ser-465, Ser-469, Ser-484, and Ser-495 each carry phosphoserine. A disordered region spans residues 492–566; sequence NSASAQKRSK…PGYGMSQSSR (75 aa). The short motif at 500 to 503 is the SXIP motif 1; mediates interaction with MAPRE1 and targeting to microtubule plus ends element; it reads SKIP. Ser-513 carries the post-translational modification Phosphoserine. The SXIP motif 2; mediates interaction with MAPRE1 and targeting to microtubule plus ends motif lies at 523–526; that stretch reads SRIP. Phosphoserine is present on residues Ser-531, Ser-535, Ser-570, Ser-572, Ser-581, Ser-614, and Ser-620. Over residues 606-616 the composition is skewed to basic and acidic residues; sequence RYESYGMHSDD. Residues 606–638 form a disordered region; sequence RYESYGMHSDDDANSDASSACSERSYSSRNGSI. Low complexity predominate over residues 620-634; that stretch reads SDASSACSERSYSSR. Residues 642 to 873 are TOG 2; that stretch reads MRQTEDVAEV…TKLLHNHLRN (232 aa). 2 HEAT repeats span residues 702 to 739 and 764 to 801; these read KVFS…KMGA and LQFN…QMDP. Phosphothreonine is present on Thr-779. Residues 864–1286 form an interaction with RSN and localization to the Golgi and kinetochores region; that stretch reads TKLLHNHLRN…DPTTDVSGQS (423 aa). Disordered stretches follow at residues 870–920 and 944–990; these read HLRN…FDYD and SFRS…QPAL. 2 stretches are compositionally biased toward polar residues: residues 872–884 and 893–914; these read RNTG…SMGS and SPAN…TLSP. Position 884 is a phosphoserine (Ser-884). Phosphoserine is present on residues Ser-944, Ser-947, Ser-1005, and Ser-1021. Residues 947-964 show a composition bias toward basic and acidic residues; it reads SQEDMSEPLKRDPKKEDG. A required for cortical localization region spans residues 1009-1286; the sequence is RDYNPYNYSD…DPTTDVSGQS (278 aa). HEAT repeat units follow at residues 1046–1083, 1090–1127, and 1208–1245; these read LDHS…TQEE, EHFK…HQPA, and LLLP…VIGD.

The protein belongs to the CLASP family. Interacts with microtubules. Interacts with MAPRE1; probably required for targeting to the growing microtubule plus ends. Interacts with CLIP2, ERC1, MAPRE3, PHLDB2 and RSN. The interaction with ERC1 may be mediated by PHLDB2. Interacts with GCC2; recruits CLASP2 to Golgi membranes. Interacts with MACF1. Interacts with SOGA1 and MTCL1. Post-translationally, phosphorylated by GSK3B. Phosphorylation by GSK3B may negatively regulate binding to microtubule lattices in lamella.

Its subcellular location is the cytoplasm. It is found in the cytoskeleton. The protein resides in the microtubule organizing center. The protein localises to the centrosome. It localises to the chromosome. Its subcellular location is the centromere. It is found in the kinetochore. The protein resides in the spindle. The protein localises to the golgi apparatus. It localises to the trans-Golgi network. Its subcellular location is the cell membrane. It is found in the cell projection. The protein resides in the ruffle membrane. The protein localises to the cell cortex. Functionally, microtubule plus-end tracking protein that promotes the stabilization of dynamic microtubules. Involved in the nucleation of noncentrosomal microtubules originating from the trans-Golgi network (TGN). Required for the polarization of the cytoplasmic microtubule arrays in migrating cells towards the leading edge of the cell. May act at the cell cortex to enhance the frequency of rescue of depolymerizing microtubules by attaching their plus-ends to cortical platforms composed of ERC1 and PHLDB2. This cortical microtubule stabilizing activity is regulated at least in part by phosphatidylinositol 3-kinase signaling. Also performs a similar stabilizing function at the kinetochore which is essential for the bipolar alignment of chromosomes on the mitotic spindle. Acts as a mediator of ERBB2-dependent stabilization of microtubules at the cell cortex. This is CLIP-associating protein 2 (Clasp2) from Rattus norvegicus (Rat).